The sequence spans 1083 residues: Chitin synthase 2 (1083 aa).

Basic and acidic residues-rich tracts occupy residues 1–10 (MSSEREERTF) and 18–30 (DDVR…ENQE). Disordered regions lie at residues 1-248 (MSSE…IADD) and 260-294 (DDDV…TLNE). The N-linked (GlcNAc...) asparagine glycan is linked to Asn23. Composition is skewed to polar residues over residues 38 to 49 (SYASSMAESQTL) and 61 to 70 (AKLQNKNRTS). Asn67 is a glycosylation site (N-linked (GlcNAc...) asparagine). Composition is skewed to basic and acidic residues over residues 78-100 (LPRD…KEQQ) and 117-128 (RLRDVNSHDKLP). Polar residues-rich tracts occupy residues 132–148 (SPRN…SRSG), 177–191 (RPWT…FTRS), and 282–292 (SYMSSESQDTL). N-linked (GlcNAc...) asparagine glycosylation occurs at Asn417. Helical transmembrane passes span 708 to 728 (WLNG…QIWF), 747 to 767 (FIQL…FYFV), 785 to 805 (TVIF…QFIL), 820 to 840 (ISMI…FYII), 860 to 880 (NMIV…ILYL), 889 to 909 (SAQY…YAFC), 987 to 1007 (YLVL…SEIY), and 1020 to 1040 (FLLW…TTFA).

This sequence belongs to the chitin synthase family. Class II subfamily.

Its subcellular location is the cell membrane. It carries out the reaction [(1-&gt;4)-N-acetyl-beta-D-glucosaminyl](n) + UDP-N-acetyl-alpha-D-glucosamine = [(1-&gt;4)-N-acetyl-beta-D-glucosaminyl](n+1) + UDP + H(+). Polymerizes chitin, a structural polymer of the cell wall and septum, by transferring the sugar moiety of UDP-GlcNAc to the non-reducing end of the growing chitin polymer. Plays a critical role in cell wall integrity and virulence. In Fusarium oxysporum f. sp. lycopersici (strain 4287 / CBS 123668 / FGSC 9935 / NRRL 34936) (Fusarium vascular wilt of tomato), this protein is Chitin synthase 2.